A 483-amino-acid chain; its full sequence is Triacylglycerol lipase ptl3 (483 aa).

Positions 141 to 340 (LILSGGGTFG…DNDIPHAKLT (200 aa)) constitute a PNPLA domain. The short motif at 145–150 (GGGTFG) is the GXGXXG element. The short motif at 172 to 176 (GSSAG) is the GXSXG element. The Nucleophile role is filled by Ser174. Asp327 serves as the catalytic Proton acceptor.

Its subcellular location is the cytoplasm. The protein resides in the lipid droplet. It catalyses the reaction a triacylglycerol + H2O = a diacylglycerol + a fatty acid + H(+). Functionally, lipid particle-localized triacylglycerol (TAG) lipase. The lipid droplet/particle is a lipid storage compartment which serves as a depot of energy and building blocks for membrane lipid biosynthesis. Involved in the mobilization of the non-polar storage lipids triacylglycerols (TAGs) from lipid particles by hydrolysis of TAGs, releasing and supplying specific fatty acids to the appropriate metabolic pathways. This chain is Triacylglycerol lipase ptl3 (ptl3), found in Schizosaccharomyces pombe (strain 972 / ATCC 24843) (Fission yeast).